Here is a 99-residue protein sequence, read N- to C-terminus: Nucleoid-associated protein LL0120 (99 aa).

This sequence belongs to the YbaB/EbfC family. Homodimer.

Its subcellular location is the cytoplasm. The protein resides in the nucleoid. In terms of biological role, binds to DNA and alters its conformation. May be involved in regulation of gene expression, nucleoid organization and DNA protection. This Lactococcus lactis subsp. lactis (strain IL1403) (Streptococcus lactis) protein is Nucleoid-associated protein LL0120 (ybcG).